Consider the following 157-residue polypeptide: Vitamin K-dependent protein C (157 aa).

The Peptidase S1 domain occupies 1-157; that stretch reads EKWELDLDIK…GCGRLHNYGV (157 aa). N-linked (GlcNAc...) asparagine glycosylation is present at asparagine 17. Aspartate 26 acts as the Charge relay system in catalysis. An N-linked (GlcNAc...) asparagine glycan is attached at asparagine 78. Cystine bridges form between cysteine 96-cysteine 110 and cysteine 121-cysteine 149. The active-site Charge relay system is serine 125.

It belongs to the peptidase S1 family. Plasma; synthesized in the liver.

The protein resides in the secreted. It is found in the golgi apparatus. It localises to the endoplasmic reticulum. It carries out the reaction Degradation of blood coagulation factors Va and VIIIa.. Protein C is a vitamin K-dependent serine protease that regulates blood coagulation by inactivating factors Va and VIIIa in the presence of calcium ions and phospholipids. Exerts a protective effect on the endothelial cell barrier function. This Felis catus (Cat) protein is Vitamin K-dependent protein C (PROC).